The sequence spans 120 residues: Large ribosomal subunit protein bL19 (120 aa).

This sequence belongs to the bacterial ribosomal protein bL19 family.

Its function is as follows. This protein is located at the 30S-50S ribosomal subunit interface and may play a role in the structure and function of the aminoacyl-tRNA binding site. The chain is Large ribosomal subunit protein bL19 from Thermosynechococcus vestitus (strain NIES-2133 / IAM M-273 / BP-1).